Here is a 302-residue protein sequence, read N- to C-terminus: Sulfate adenylyltransferase subunit 2 (302 aa).

The disordered stretch occupies residues 280–302 (RQGRAIDHDQSGSMELKKRQGYF).

Belongs to the PAPS reductase family. CysD subfamily. Heterodimer composed of CysD, the smaller subunit, and CysN.

It catalyses the reaction sulfate + ATP + H(+) = adenosine 5'-phosphosulfate + diphosphate. The protein operates within sulfur metabolism; hydrogen sulfide biosynthesis; sulfite from sulfate: step 1/3. Its function is as follows. With CysN forms the ATP sulfurylase (ATPS) that catalyzes the adenylation of sulfate producing adenosine 5'-phosphosulfate (APS) and diphosphate, the first enzymatic step in sulfur assimilation pathway. APS synthesis involves the formation of a high-energy phosphoric-sulfuric acid anhydride bond driven by GTP hydrolysis by CysN coupled to ATP hydrolysis by CysD. The sequence is that of Sulfate adenylyltransferase subunit 2 from Vibrio vulnificus (strain CMCP6).